The following is a 237-amino-acid chain: Ribonuclease 3 (237 aa).

In terms of domain architecture, RNase III spans 4–130 (IQILFQTLNI…LFGAIYLDLG (127 aa)). Residue Glu-45 participates in Mg(2+) binding. Asp-49 is a catalytic residue. Mg(2+) is bound by residues Asp-116 and Glu-119. Residue Glu-119 is part of the active site. The region spanning 154-222 (DFKTQLQEIV…AQQALSKVAK (69 aa)) is the DRBM domain.

The protein belongs to the ribonuclease III family. Homodimer. It depends on Mg(2+) as a cofactor.

It localises to the cytoplasm. It carries out the reaction Endonucleolytic cleavage to 5'-phosphomonoester.. In terms of biological role, digests double-stranded RNA. Involved in the processing of primary rRNA transcript to yield the immediate precursors to the large and small rRNAs (23S and 16S). Processes some mRNAs, and tRNAs when they are encoded in the rRNA operon. Processes pre-crRNA and tracrRNA of type II CRISPR loci if present in the organism. The sequence is that of Ribonuclease 3 from Aster yellows witches'-broom phytoplasma (strain AYWB).